We begin with the raw amino-acid sequence, 158 residues long: 14-3-3 protein gamma (158 aa).

Residues 1-158 form an interaction with SPATA18/MIEAP region; it reads AAAMKNVTEL…TSDQQDDDGG (158 aa). Ser-48 bears the Phosphoserine mark. A Phosphotyrosine modification is found at Tyr-60. Thr-72 is modified (phosphothreonine). Position 130 is a phosphoserine (Ser-130). A Phosphothreonine modification is found at Thr-149. At Ser-150 the chain carries Phosphoserine.

The protein belongs to the 14-3-3 family. As to quaternary structure, homodimer. Part of a complex that contains DSG3, PKP1, YAP1 and YWHAG; the complex is required for localization of DSG3 and YAP1 to the cell membrane in keratinocytes. Interacts with SAMSN1. Interacts with RAF1, SSH1 and CRTC2/TORC2. Interacts with ABL1 (phosphorylated form); the interaction retains it in the cytoplasm. Interacts with GAB2. Interacts with MDM4 (phosphorylated); negatively regulates MDM4 activity toward TP53. Interacts with PKA-phosphorylated AANAT and SIRT2. Interacts with the 'Thr-369' phosphorylated form of DAPK2. Interacts with PI4KB, TBC1D22A and TBC1D22B. Interacts with SLITRK1. Interacts with LRRK2; this interaction is dependent on LRRK2 phosphorylation. Interacts with MARK2 and MARK3. Interacts with MEFV. Interacts with ENDOG, TSC2 and PIK3C3; interaction with ENDOG weakens its interaction with TSC2 and PIK3C3. Interacts with (phosphorylated) WDR24. Interacts with BEST1; this interaction promotes L-glutamate channel activity leading to the positive regulation of NMDA glutamate receptor activity through the L-glutamate secretion. Interacts with PKP1 (when phosphorylated); the interaction results in translocation of PKP1 to the cytoplasm and loss of intercellular adhesion in keratinocytes. Interacts with SPATA18/MIEAP; a protein that also plays a role in MALM. Phosphorylated by various PKC isozymes.

Its subcellular location is the cytoplasm. It localises to the cytosol. The protein localises to the mitochondrion matrix. Adapter protein implicated in the regulation of a large spectrum of both general and specialized signaling pathways. Binds to a large number of partners, usually by recognition of a phosphoserine or phosphothreonine motif. Binding generally results in the modulation of the activity of the binding partner. Promotes inactivation of WDR24 component of the GATOR2 complex by binding to phosphorylated WDR24. Participates in the positive regulation of NMDA glutamate receptor activity by promoting the L-glutamate secretion through interaction with BEST1. Reduces keratinocyte intercellular adhesion, via interacting with PKP1 and sequestering it in the cytoplasm, thereby reducing its incorporation into desmosomes. Plays a role in mitochondrial protein catabolic process (also named MALM) that promotes the degradation of damaged proteins inside mitochondria. This is 14-3-3 protein gamma from Ovis aries (Sheep).